We begin with the raw amino-acid sequence, 181 residues long: MAEGHGTTAHTGAEGGHKAPFPPFQQDTFASQLVSLLIAFVALYLIVSKVALPKVGGVLDARQKKIEDDFAAALRLKGESDDALKAYEDALAQARARAQAIGTETRERLNAAAEAERKTLEQRLAVKLADAEKTIAATREQAMSNVRGIATDAASAIVQQLVGIAPDAKAVGHAVDATLKG.

Positions 1 to 12 (MAEGHGTTAHTG) are enriched in low complexity. A disordered region spans residues 1-20 (MAEGHGTTAHTGAEGGHKAP). A helical membrane pass occupies residues 33-53 (LVSLLIAFVALYLIVSKVALP).

It belongs to the ATPase B chain family. F-type ATPases have 2 components, F(1) - the catalytic core - and F(0) - the membrane proton channel. F(1) has five subunits: alpha(3), beta(3), gamma(1), delta(1), epsilon(1). F(0) has three main subunits: a(1), b(2) and c(10-14). The alpha and beta chains form an alternating ring which encloses part of the gamma chain. F(1) is attached to F(0) by a central stalk formed by the gamma and epsilon chains, while a peripheral stalk is formed by the delta and b chains.

Its subcellular location is the cell inner membrane. F(1)F(0) ATP synthase produces ATP from ADP in the presence of a proton or sodium gradient. F-type ATPases consist of two structural domains, F(1) containing the extramembraneous catalytic core and F(0) containing the membrane proton channel, linked together by a central stalk and a peripheral stalk. During catalysis, ATP synthesis in the catalytic domain of F(1) is coupled via a rotary mechanism of the central stalk subunits to proton translocation. Functionally, component of the F(0) channel, it forms part of the peripheral stalk, linking F(1) to F(0). The b'-subunit is a diverged and duplicated form of b found in plants and photosynthetic bacteria. This Rhodopseudomonas palustris (strain BisA53) protein is ATP synthase subunit b 2 (atpF2).